A 139-amino-acid chain; its full sequence is NADH dehydrogenase [ubiquinone] 1 alpha subcomplex subunit MCI4 (139 aa).

It belongs to the complex I NDUFA5 subunit family.

Its subcellular location is the mitochondrion inner membrane. Its function is as follows. Accessory subunit of the mitochondrial membrane respiratory chain NADH dehydrogenase (Complex I), that is believed not to be involved in catalysis. Complex I functions in the transfer of electrons from NADH to the respiratory chain. The immediate electron acceptor for the enzyme is believed to be ubiquinone. Involved in osmotic and oxidative resistance, yeast to hypha transition and the ability to damage and invade oral epithelial cells. The protein is NADH dehydrogenase [ubiquinone] 1 alpha subcomplex subunit MCI4 of Candida albicans (strain SC5314 / ATCC MYA-2876) (Yeast).